The following is a 175-amino-acid chain: NADH-quinone oxidoreductase subunit I 2 (175 aa).

2 4Fe-4S ferredoxin-type domains span residues 50–82 and 98–127; these read HVLQ…IEAA and KVYN…HGHG. [4Fe-4S] cluster-binding residues include Cys-62, Cys-65, Cys-68, Cys-72, Cys-107, Cys-110, Cys-113, and Cys-117.

Belongs to the complex I 23 kDa subunit family. As to quaternary structure, NDH-1 is composed of 14 different subunits. Subunits NuoA, H, J, K, L, M, N constitute the membrane sector of the complex. [4Fe-4S] cluster serves as cofactor.

Its subcellular location is the cell inner membrane. It catalyses the reaction a quinone + NADH + 5 H(+)(in) = a quinol + NAD(+) + 4 H(+)(out). In terms of biological role, NDH-1 shuttles electrons from NADH, via FMN and iron-sulfur (Fe-S) centers, to quinones in the respiratory chain. The immediate electron acceptor for the enzyme in this species is believed to be ubiquinone. Couples the redox reaction to proton translocation (for every two electrons transferred, four hydrogen ions are translocated across the cytoplasmic membrane), and thus conserves the redox energy in a proton gradient. The chain is NADH-quinone oxidoreductase subunit I 2 from Koribacter versatilis (strain Ellin345).